A 115-amino-acid chain; its full sequence is Sericin-1 (115 aa).

A disordered region spans residues 1–115; the sequence is GSSGSSGSSG…GGSSSTSSSN (115 aa).

As to expression, produced exclusively in the middle (MSG) section of silk glands.

It is found in the secreted. Provides the silk fibroin thread with a sticky coating. Acts as a cement by sticking silk threads together. The sequence is that of Sericin-1 (SER1) from Galleria mellonella (Greater wax moth).